A 286-amino-acid chain; its full sequence is Pantothenate synthetase (286 aa).

30-37 contributes to the ATP binding site; the sequence is MGNLHEGH. Histidine 37 serves as the catalytic Proton donor. Residue glutamine 64 coordinates (R)-pantoate. Position 64 (glutamine 64) interacts with beta-alanine. Residue 151 to 154 participates in ATP binding; that stretch reads GKKD. A (R)-pantoate-binding site is contributed by glutamine 157. ATP contacts are provided by residues leucine 180 and 188–191; that span reads LSSR.

The protein belongs to the pantothenate synthetase family. Homodimer.

The protein resides in the cytoplasm. It carries out the reaction (R)-pantoate + beta-alanine + ATP = (R)-pantothenate + AMP + diphosphate + H(+). It participates in cofactor biosynthesis; (R)-pantothenate biosynthesis; (R)-pantothenate from (R)-pantoate and beta-alanine: step 1/1. Functionally, catalyzes the condensation of pantoate with beta-alanine in an ATP-dependent reaction via a pantoyl-adenylate intermediate. The chain is Pantothenate synthetase from Leptothrix cholodnii (strain ATCC 51168 / LMG 8142 / SP-6) (Leptothrix discophora (strain SP-6)).